The chain runs to 417 residues: UDP-N-acetylglucosamine 1-carboxyvinyltransferase (417 aa).

22 to 23 is a phosphoenolpyruvate binding site; sequence KN. Arginine 93 is a binding site for UDP-N-acetyl-alpha-D-glucosamine. The active-site Proton donor is the cysteine 117. Cysteine 117 carries the post-translational modification 2-(S-cysteinyl)pyruvic acid O-phosphothioketal. Residues aspartate 304 and isoleucine 326 each coordinate UDP-N-acetyl-alpha-D-glucosamine.

The protein belongs to the EPSP synthase family. MurA subfamily.

The protein resides in the cytoplasm. The catalysed reaction is phosphoenolpyruvate + UDP-N-acetyl-alpha-D-glucosamine = UDP-N-acetyl-3-O-(1-carboxyvinyl)-alpha-D-glucosamine + phosphate. It participates in cell wall biogenesis; peptidoglycan biosynthesis. Its function is as follows. Cell wall formation. Adds enolpyruvyl to UDP-N-acetylglucosamine. The polypeptide is UDP-N-acetylglucosamine 1-carboxyvinyltransferase (Neisseria gonorrhoeae (strain ATCC 700825 / FA 1090)).